Consider the following 267-residue polypeptide: MEAFPWAPRSPRRARAPAPMALVPSARYVSASGPVHPQPFSSWNDYLGLATLITRASDRGSPHEGPGPTAAGPTMGPPEDDEDDDGEEPEAGGRYLGGALELRALELCAGPAEPGLLEERFAELNPFAGRAAAVLLGCAPTASTTAAAASTAEVTPREEPSPAWAAEPRLHAASGATAARLLKPELQVCVFCRNNKEAVALYTTHILKGPDGRVLCPVLRRYTCPLCGASGDNAHTIKYCPLSKVPPPTVRPPPRSNRDSLPSKKLR.

Residues 40–56 are essential for its translational repressor activity; that stretch reads FSSWNDYLGLATLITRA. The tract at residues 57 to 94 is disordered; that stretch reads SDRGSPHEGPGPTAAGPTMGPPEDDEDDDGEEPEAGGR. Residues 78–90 show a composition bias toward acidic residues; that stretch reads PEDDEDDDGEEPE. The Nanos-type zinc finger occupies 188 to 242; sequence VCVFCRNNKEAVALYTTHILKGPDGRVLCPVLRRYTCPLCGASGDNAHTIKYCPL. Residues C189, C192, H205, C216, C224, C227, H235, and C240 each coordinate Zn(2+). 2 consecutive short sequence motifs (C2HC) follow at residues 189–216 and 224–240; these read CVFC…RVLC and CPLC…IKYC. Residues 243 to 267 are disordered; sequence SKVPPPTVRPPPRSNRDSLPSKKLR. Positions 244–255 are enriched in pro residues; that stretch reads KVPPPTVRPPPR. Basic and acidic residues predominate over residues 256 to 267; sequence SNRDSLPSKKLR.

It belongs to the nanos family. Interacts with PUM2, SNAPIN and CTNNB1. Interacts (via N-terminal region) with CTNND1. Interacts with DDX20 (via N-terminal region). In terms of tissue distribution, expressed in the oocyte. Transiently expressed in eight-cell embryos. At 12.5 dpc, it is re-expressed in the central nervous system and the expression continues in the adult brain, in which the hippocampal formation is the predominant region. Expressed in the seminiferous tubules of mature testis, but not in the primordial germ cells.

It is found in the cytoplasm. It localises to the perinuclear region. In terms of biological role, may act as a translational repressor which regulates translation of specific mRNAs by forming a complex with PUM2 that associates with the 3'-UTR of mRNA targets. Capable of interfering with the proadhesive and anti-invasive functions of E-cadherin. Up-regulates the production of MMP14 to promote tumor cell invasion. Not essential for normal development. This chain is Nanos homolog 1 (Nanos1), found in Mus musculus (Mouse).